The primary structure comprises 318 residues: NADH-ubiquinone oxidoreductase chain 1 (318 aa).

8 consecutive transmembrane segments (helical) span residues 2-22, 70-90, 100-120, 136-156, 172-192, 222-242, 253-273, and 294-314; these read FMIN…FLTL, MFII…SPLP, LGVL…LWSG, VAQT…VLLM, LWLL…TLAE, LFFL…AILF, ELYT…FLWI, and LPLT…TASI.

This sequence belongs to the complex I subunit 1 family. In terms of assembly, core subunit of respiratory chain NADH dehydrogenase (Complex I) which is composed of 45 different subunits.

Its subcellular location is the mitochondrion inner membrane. The catalysed reaction is a ubiquinone + NADH + 5 H(+)(in) = a ubiquinol + NAD(+) + 4 H(+)(out). Functionally, core subunit of the mitochondrial membrane respiratory chain NADH dehydrogenase (Complex I) which catalyzes electron transfer from NADH through the respiratory chain, using ubiquinone as an electron acceptor. Essential for the catalytic activity and assembly of complex I. This Balaenoptera musculus (Blue whale) protein is NADH-ubiquinone oxidoreductase chain 1 (MT-ND1).